A 307-amino-acid polypeptide reads, in one-letter code: UPF0276 protein Bphyt_5128 (307 aa).

The protein belongs to the UPF0276 family.

This is UPF0276 protein Bphyt_5128 from Paraburkholderia phytofirmans (strain DSM 17436 / LMG 22146 / PsJN) (Burkholderia phytofirmans).